The primary structure comprises 349 residues: DNA replication and repair protein RecF (349 aa).

30-37 contributes to the ATP binding site; the sequence is GKNGSGKT.

It belongs to the RecF family.

The protein resides in the cytoplasm. Functionally, the RecF protein is involved in DNA metabolism; it is required for DNA replication and normal SOS inducibility. RecF binds preferentially to single-stranded, linear DNA. It also seems to bind ATP. The sequence is that of DNA replication and repair protein RecF from Francisella tularensis subsp. tularensis (strain FSC 198).